Here is a 309-residue protein sequence, read N- to C-terminus: Pantothenate synthetase (309 aa).

Threonine 2 carries the post-translational modification N-acetylthreonine. 40-47 (MGALHEGH) contacts ATP. Catalysis depends on histidine 47, which acts as the Proton donor. Glutamine 72 serves as a coordination point for (R)-pantoate. Glutamine 72 lines the beta-alanine pocket. The Mg(2+) site is built by aspartate 88, aspartate 89, and glutamine 92. 158–161 (GEKD) contributes to the ATP binding site. Glutamine 164 serves as a coordination point for (R)-pantoate. ATP is bound by residues valine 187 and 195 to 198 (MSSR).

This sequence belongs to the pantothenate synthetase family.

The protein localises to the cytoplasm. It catalyses the reaction (R)-pantoate + beta-alanine + ATP = (R)-pantothenate + AMP + diphosphate + H(+). It participates in cofactor biosynthesis; (R)-pantothenate biosynthesis; (R)-pantothenate from (R)-pantoate and beta-alanine: step 1/1. Pantothenate exhibits uncompetitive inhibition toward both D-pantoate and ATP, and non-competitive inhibition toward beta-alanine. AMPCPP exhibits competitive inhibition toward ATP, uncompetitive inhibition toward beta-alanine, and non-competitive inhibition toward D-pantoate. The enzyme is most active in the presence of magnesium or manganese. Other divalent cations (cobalt, nickel, zinc) are less effective. Functionally, catalyzes the condensation of pantoate with beta-alanine in an ATP-dependent reaction via a pantoyl-adenylate intermediate. The protein is Pantothenate synthetase (panC) of Mycobacterium tuberculosis (strain ATCC 25618 / H37Rv).